The primary structure comprises 316 residues: Apolipoprotein E (316 aa).

A signal peptide spans 1–18; sequence MKALWAVLVVTLLAGCLA. Repeat copies occupy residues 76-97, 98-119, 120-141, 142-163, 164-185, 186-207, 208-229, and 230-251. The segment at 76-251 is 8 X 22 AA approximate tandem repeats; sequence VLMEDTMTEL…RLEEMREQME (176 aa). A Methionine sulfoxide modification is found at methionine 139. Serine 143 carries the phosphoserine modification. Positions 154–164 are LDL and other lipoprotein receptors binding; it reads HLRKLRKRLMR. 158-161 contacts heparin; it reads LRKR. Residues 206–286 form a lipid-binding and lipoprotein association region; the sequence is TANLGAGAGK…GWFEPLVEDM (81 aa). 225-232 contacts heparin; that stretch reads GARIRGRL. A homooligomerization region spans residues 262 to 316; it reads QQMRLQAEIFQARLKGWFEPLVEDMQRQWANLVEKIQASVAANPIPPSSVPQESP. The specificity for association with VLDL stretch occupies residues 274 to 286; it reads RLKGWFEPLVEDM.

Belongs to the apolipoprotein A1/A4/E family. Homotetramer. May interact with ABCA1; functionally associated with ABCA1 in the biogenesis of HDLs. May interact with APP/A4 amyloid-beta peptide; the interaction is extremely stable in vitro but its physiological significance is unclear. May interact with MAPT. May interact with MAP2. In the cerebrospinal fluid, interacts with secreted SORL1. Interacts with PMEL; this allows the loading of PMEL luminal fragment on ILVs to induce fibril nucleation. In terms of processing, APOE exists as multiple glycosylated and sialylated glycoforms within cells and in plasma. The extent of glycosylation and sialylation are tissue and context specific. Post-translationally, glycated in plasma VLDL. Phosphorylated by FAM20C in the extracellular medium.

It is found in the secreted. It localises to the extracellular space. The protein resides in the extracellular matrix. The protein localises to the extracellular vesicle. Its subcellular location is the endosome. It is found in the multivesicular body. APOE is an apolipoprotein, a protein associating with lipid particles, that mainly functions in lipoprotein-mediated lipid transport between organs via the plasma and interstitial fluids. APOE is a core component of plasma lipoproteins and is involved in their production, conversion and clearance. Apolipoproteins are amphipathic molecules that interact both with lipids of the lipoprotein particle core and the aqueous environment of the plasma. As such, APOE associates with chylomicrons, chylomicron remnants, very low density lipoproteins (VLDL) and intermediate density lipoproteins (IDL) but shows a preferential binding to high-density lipoproteins (HDL). It also binds a wide range of cellular receptors including the LDL receptor/LDLR, the LDL receptor-related proteins LRP1, LRP2 and LRP8 and the very low-density lipoprotein receptor/VLDLR that mediate the cellular uptake of the APOE-containing lipoprotein particles. Finally, APOE also has a heparin-binding activity and binds heparan-sulfate proteoglycans on the surface of cells, a property that supports the capture and the receptor-mediated uptake of APOE-containing lipoproteins by cells. A main function of APOE is to mediate lipoprotein clearance through the uptake of chylomicrons, VLDLs, and HDLs by hepatocytes. APOE is also involved in the biosynthesis by the liver of VLDLs as well as their uptake by peripheral tissues ensuring the delivery of triglycerides and energy storage in muscle, heart and adipose tissues. By participating in the lipoprotein-mediated distribution of lipids among tissues, APOE plays a critical role in plasma and tissues lipid homeostasis. APOE is also involved in two steps of reverse cholesterol transport, the HDLs-mediated transport of cholesterol from peripheral tissues to the liver, and thereby plays an important role in cholesterol homeostasis. First, it is functionally associated with ABCA1 in the biogenesis of HDLs in tissues. Second, it is enriched in circulating HDLs and mediates their uptake by hepatocytes. APOE also plays an important role in lipid transport in the central nervous system, regulating neuron survival and sprouting. The sequence is that of Apolipoprotein E (Apoe) from Peromyscus leucopus (White-footed mouse).